A 183-amino-acid polypeptide reads, in one-letter code: A-type ATP synthase subunit E (183 aa).

This sequence belongs to the V-ATPase E subunit family. As to quaternary structure, has multiple subunits, A(3), B(3), C, D, E, F, G, I and K(x); there may be a few other subunits as well.

It is found in the cell membrane. Component of the A-type ATP synthase that produces ATP from ADP in the presence of a proton gradient across the membrane. The chain is A-type ATP synthase subunit E from Methanosarcina mazei (strain ATCC BAA-159 / DSM 3647 / Goe1 / Go1 / JCM 11833 / OCM 88) (Methanosarcina frisia).